Consider the following 626-residue polypeptide: 1-deoxy-D-xylulose-5-phosphate synthase 2 (626 aa).

Thiamine diphosphate-binding positions include H74 and 115 to 117 (GHA). D146 serves as a coordination point for Mg(2+). Thiamine diphosphate is bound by residues 147-148 (GS), N175, F286, and E368. A Mg(2+)-binding site is contributed by N175.

The protein belongs to the transketolase family. DXPS subfamily. In terms of assembly, homodimer. Requires Mg(2+) as cofactor. The cofactor is thiamine diphosphate.

The enzyme catalyses D-glyceraldehyde 3-phosphate + pyruvate + H(+) = 1-deoxy-D-xylulose 5-phosphate + CO2. Its pathway is metabolic intermediate biosynthesis; 1-deoxy-D-xylulose 5-phosphate biosynthesis; 1-deoxy-D-xylulose 5-phosphate from D-glyceraldehyde 3-phosphate and pyruvate: step 1/1. Catalyzes the acyloin condensation reaction between C atoms 2 and 3 of pyruvate and glyceraldehyde 3-phosphate to yield 1-deoxy-D-xylulose-5-phosphate (DXP). The protein is 1-deoxy-D-xylulose-5-phosphate synthase 2 of Geobacter sulfurreducens (strain ATCC 51573 / DSM 12127 / PCA).